The chain runs to 606 residues: Sodium-independent sulfate anion transporter (606 aa).

The Extracellular segment spans residues 1 to 51; the sequence is MPSSVTALGQARSSGPGMAPSACCCSPAALQRRLPILAWLPSYSLQWLKMD. The chain crosses the membrane as a helical span at residues 52–72; sequence FVAGLSVGLTAIPQALAYAEV. Residue A73 is a topological domain, cytoplasmic. A helical transmembrane segment spans residues 74–94; that stretch reads GLPPQYGLYSAFMGCFVYFFL. The Extracellular portion of the chain corresponds to 95–100; it reads GTSRDV. The chain crosses the membrane as a helical span at residues 101-117; that stretch reads TLGPTAIMSLLVSFYTF. Residues 118–119 are Cytoplasmic-facing; the sequence is HE. A helical membrane pass occupies residues 120–140; the sequence is PAYAVLLAFLSGCIQLAMGVL. Residues 141–147 lie on the Extracellular side of the membrane; the sequence is RLGFLLD. The helical transmembrane segment at 148-168 threads the bilayer; sequence FISYPVIKGFTSAAAVTIGFG. Over 169–197 the chain is Cytoplasmic; the sequence is QIKNLLGLQNIPRPFFLQVYHTFLRIAET. The chain crosses the membrane as a helical span at residues 198–218; sequence RVGDAVLGLVCMLLLLVLKLM. Residues 219–250 lie on the Extracellular side of the membrane; that stretch reads RDHVPPVHPEMPPGVRLSRGLVWAATTARNAL. A helical membrane pass occupies residues 251–271; that stretch reads VVSFAALVAYSFEVTGYQPFI. The Cytoplasmic portion of the chain corresponds to 272–307; the sequence is LTGETAEGLPPVRIPPFSVTTANGTISFTEMVQDMG. Residues 308–328 traverse the membrane as a helical segment; sequence AGLAVVPLMGLLESIAVAKAF. Over 329–341 the chain is Extracellular; that stretch reads ASQNNYRIDANQE. A helical membrane pass occupies residues 342–362; the sequence is LLAIGLTNMLGSLVSSYPVTG. At 363-374 the chain is on the cytoplasmic side; it reads SFGRTAVNAQSG. Residues 375–395 traverse the membrane as a helical segment; it reads VCTPAGGLVTGVLVLLSLDYL. The Extracellular segment spans residues 396–398; sequence TSL. A helical membrane pass occupies residues 399-419; that stretch reads FYYIPKSALAAVIIMAVAPLF. Residues 420–441 lie on the Cytoplasmic side of the membrane; that stretch reads DTKIFRTLWRVKRLDLLPLCVT. A helical transmembrane segment spans residues 442-462; it reads FLLCFWEVQYGILAGALVSLL. Residues 463-606 lie on the Extracellular side of the membrane; sequence MLLHSAARPE…LDQKVALLKA (144 aa). In terms of domain architecture, STAS spans 470–584; the sequence is RPETKVSEGP…EAEKHLRQEP (115 aa).

Belongs to the SLC26A/SulP transporter (TC 2.A.53) family. In terms of tissue distribution, detected in all tissues tested with highest expression observed in brain, kidney, HEVEC and placenta and lowest in pancreas, skeletal muscle, liver, lung and heart.

The protein resides in the cell membrane. It is found in the lysosome membrane. The protein localises to the apical cell membrane. Its subcellular location is the basolateral cell membrane. The catalysed reaction is hydrogencarbonate(in) + chloride(out) = hydrogencarbonate(out) + chloride(in). It carries out the reaction sulfate(in) + H(+)(in) = sulfate(out) + H(+)(out). It catalyses the reaction oxalate(in) + chloride(out) = oxalate(out) + chloride(in). Sodium-independent anion exchanger mediating bicarbonate, chloride, sulfate and oxalate transport. Exhibits sodium-independent sulfate anion transporter activity that may cooperate with SLC26A2 to mediate DIDS-sensitive sulfate uptake into high endothelial venules endothelial cells (HEVEC). In the kidney, mediates chloride-bicarbonate exchange, facilitating V-ATPase-mediated acid secretion. May function as a chloride channel, playing an important role in moderating chloride homeostasis and neuronal activity in the cerebellum. This chain is Sodium-independent sulfate anion transporter, found in Homo sapiens (Human).